Here is a 614-residue protein sequence, read N- to C-terminus: Protein NRT1/ PTR FAMILY 7.3 (614 aa).

Transmembrane regions (helical) follow at residues 41-61 and 87-107; these read WVAG…FFGV and WTGT…SYWG. A Phosphothreonine modification is found at Thr111. 9 helical membrane-spanning segments follow: residues 114–134, 152–172, 196–216, 226–246, 355–375, 390–410, 435–455, 515–535, and 559–579; these read IFQV…YMFL, MMEI…YGGY, IAFF…SNTI, WALG…LFLV, PIWL…SLFV, IPPA…IFLY, MGIG…VECY, LCMM…TMVV, and FYFL…ACAK. The disordered stretch occupies residues 592-614; it reads MQDMSDDDYDTESEEEREKDSKV. The segment covering 593–606 has biased composition (acidic residues); it reads QDMSDDDYDTESEE.

This sequence belongs to the major facilitator superfamily. Proton-dependent oligopeptide transporter (POT/PTR) (TC 2.A.17) family. High expression in roots. Barely detected in shoots. Expressed in root pericycle cells close to the xylem.

The protein resides in the cell membrane. Functionally, low-affinity proton-dependent bidirectional nitrate transporter. Involved in nitrate loading into xylem and not in nitrate uptake. Not involved in histidine or dipeptides transport. The protein is Protein NRT1/ PTR FAMILY 7.3 (NPF7.3) of Arabidopsis thaliana (Mouse-ear cress).